We begin with the raw amino-acid sequence, 393 residues long: MANDFLFTSESVSEGHPDKVADQISDAILDAIFAQDPRSRVAAETLTNTGLVVLAGEITTNAHVDYIQVARDTIKRIGYDNTEYGIDYKGCAVLVAYDKQSNDIAQGVDQASDDHLNTGAGDQGLMFGYACDETPELMPAPIYYAHRLVERQAQLRKDGRLPFLRPDAKSQVTMRYVDGKPHSIDTVVLSTQHSPDQSETAKKMKASFTEAIIEEIIKPVLPKEWLKDTKYLINPTGRFVIGGPQGDCGLTGRKIIVDTYGGACPHGGGAFSGKDPTKVDRSAAYAARYVAKNIVAAGLARQCQIQVAYAIGVARPMNITVYTEGTGVIPDDQLARLVAEHFDLRPKGIIQMLDLLRPIYEKTAAYGHFGREEPEFSWEKTDKANALRAAAGR.

H16 lines the ATP pocket. Residue D18 coordinates Mg(2+). E44 lines the K(+) pocket. L-methionine-binding residues include E57 and Q100. Positions 100 to 110 are flexible loop; it reads QSNDIAQGVDQ. Residues 167-169, 238-239, D247, 253-254, A270, and K274 contribute to the ATP site; these read DAK, RF, and RK. Residue D247 coordinates L-methionine. K278 contacts L-methionine.

The protein belongs to the AdoMet synthase family. As to quaternary structure, homotetramer; dimer of dimers. Requires Mg(2+) as cofactor. K(+) is required as a cofactor.

The protein localises to the cytoplasm. The enzyme catalyses L-methionine + ATP + H2O = S-adenosyl-L-methionine + phosphate + diphosphate. The protein operates within amino-acid biosynthesis; S-adenosyl-L-methionine biosynthesis; S-adenosyl-L-methionine from L-methionine: step 1/1. In terms of biological role, catalyzes the formation of S-adenosylmethionine (AdoMet) from methionine and ATP. The overall synthetic reaction is composed of two sequential steps, AdoMet formation and the subsequent tripolyphosphate hydrolysis which occurs prior to release of AdoMet from the enzyme. This is S-adenosylmethionine synthase from Methylibium petroleiphilum (strain ATCC BAA-1232 / LMG 22953 / PM1).